A 36-amino-acid chain; its full sequence is Asteropin-A (36 aa).

3 disulfides stabilise this stretch: cysteine 2-cysteine 18, cysteine 9-cysteine 25, and cysteine 17-cysteine 35.

Sialidase inhibitor. Competitively inhibits bacterial sialidases, but not viral sialidases. Does not inhibit glycosidases or proteases. Has no antitumor activity. The chain is Asteropin-A from Asteropus simplex (Marine sponge).